A 383-amino-acid polypeptide reads, in one-letter code: Arginine biosynthesis bifunctional protein ArgJ 1 (383 aa).

The segment at 1–25 (MTVTAPKGSTGGGCRRGSKESGQPD) is disordered. Substrate-binding residues include Thr-146, Lys-168, Thr-179, Glu-259, Asn-378, and Ser-383. Catalysis depends on Thr-179, which acts as the Nucleophile.

It belongs to the ArgJ family. Heterotetramer of two alpha and two beta chains.

The protein resides in the cytoplasm. The catalysed reaction is N(2)-acetyl-L-ornithine + L-glutamate = N-acetyl-L-glutamate + L-ornithine. The enzyme catalyses L-glutamate + acetyl-CoA = N-acetyl-L-glutamate + CoA + H(+). The protein operates within amino-acid biosynthesis; L-arginine biosynthesis; L-ornithine and N-acetyl-L-glutamate from L-glutamate and N(2)-acetyl-L-ornithine (cyclic): step 1/1. Its pathway is amino-acid biosynthesis; L-arginine biosynthesis; N(2)-acetyl-L-ornithine from L-glutamate: step 1/4. Functionally, catalyzes two activities which are involved in the cyclic version of arginine biosynthesis: the synthesis of N-acetylglutamate from glutamate and acetyl-CoA as the acetyl donor, and of ornithine by transacetylation between N(2)-acetylornithine and glutamate. In Streptomyces clavuligerus, this protein is Arginine biosynthesis bifunctional protein ArgJ 1.